We begin with the raw amino-acid sequence, 71 residues long: Sec-independent protein translocase protein TatA (71 aa).

The helical transmembrane segment at 1–21 threads the bilayer; sequence MGASPVQLLIVLFIAVLVFGG.

Belongs to the TatA/E family. As to quaternary structure, the Tat system comprises two distinct complexes: a TatABC complex, containing multiple copies of TatA, TatB and TatC subunits, and a separate TatA complex, containing only TatA subunits. Substrates initially bind to the TatABC complex, which probably triggers association of the separate TatA complex to form the active translocon.

The protein resides in the cell inner membrane. Functionally, part of the twin-arginine translocation (Tat) system that transports large folded proteins containing a characteristic twin-arginine motif in their signal peptide across membranes. TatA could form the protein-conducting channel of the Tat system. In Dichelobacter nodosus (strain VCS1703A), this protein is Sec-independent protein translocase protein TatA.